A 149-amino-acid chain; its full sequence is Calmodulin (149 aa).

Ala-2 is subject to N-acetylalanine. 4 consecutive EF-hand domains span residues 8 to 43 (EQIAEFKEAFSLFDKDGDGTITTKELGTVMRSLGQN), 44 to 79 (PTEAELQDMINEVDADGNGTIDFPEFLTMMARKMKD), 81 to 116 (DSEEEIREAFRVFDKDGNGYISAAELRHVMTNLGEK), and 117 to 149 (LTDEEVDEMIREADIDGDGQVNYEEFVQIMTAK). Ca(2+) contacts are provided by Asp-21, Asp-23, Asp-25, Thr-27, Glu-32, Asp-57, Asp-59, Asn-61, Thr-63, Glu-68, Asp-94, Asp-96, Asn-98, Tyr-100, and Glu-105. At Lys-116 the chain carries N6,N6,N6-trimethyllysine. Ca(2+)-binding residues include Asp-130, Asp-132, Asp-134, Gln-136, and Glu-141.

Belongs to the calmodulin family.

Its function is as follows. Calmodulin acts as part of a calcium signal transduction pathway by mediating the control of a large number of enzymes, ion channels, aquaporins and other proteins through calcium-binding. Calcium-binding is required for the activation of calmodulin. Among the enzymes to be stimulated by the calmodulin-calcium complex are a number of protein kinases, such as myosin light-chain kinases and calmodulin-dependent protein kinase type II (CaMK2), and phosphatases. This is Calmodulin (calm) from Epinephelus akaara (Hong Kong grouper).